Reading from the N-terminus, the 890-residue chain is Serine/threonine-protein kinase D3 (890 aa).

Phosphoserine occurs at positions 6, 27, 37, 41, and 44. Residues 154 to 204 form a Phorbol-ester/DAG-type 1 zinc finger; that stretch reads PHTLYVHSYKAPTFCDYCGEMLWGLVRQGLKCEGCGLNYHKRCAFKIPNNC. Phosphoserine occurs at positions 213 and 216. Residues 271-321 form a Phorbol-ester/DAG-type 2 zinc finger; sequence PHTFAVHSYTRPTICQYCKRLLKGLFRQGMQCKDCKFNCHKRCASKVPRDC. Residues 332-371 are disordered; sequence SSLGTDTDIPMDIDNNDINSDSSRGLDDTEEPSPPEDKMF. S364, S391, and S395 each carry phosphoserine. The 117-residue stretch at 416 to 532 folds into the PH domain; the sequence is TMVKEGWMVH…WEKAIRQALM (117 aa). Y426 is modified (phosphotyrosine). S442 is subject to Phosphoserine. At Y457 the chain carries Phosphotyrosine. T535 carries the post-translational modification Phosphothreonine. S539 is modified (phosphoserine). One can recognise a Protein kinase domain in the interval 576-832; it reads IFADEVLGSG…VDKSLSHPWL (257 aa). Residues 582–590 and K605 each bind ATP; that span reads LGSGQFGIV. D699 acts as the Proton acceptor in catalysis. Residue S731 is modified to Phosphoserine; by PKC. The residue at position 735 (S735) is a Phosphoserine; by autocatalysis. The residue at position 742 (Y742) is a Phosphotyrosine.

It belongs to the protein kinase superfamily. CAMK Ser/Thr protein kinase family. PKD subfamily. It depends on Mg(2+) as a cofactor. Ubiquitous.

The protein localises to the cytoplasm. It is found in the membrane. It catalyses the reaction L-seryl-[protein] + ATP = O-phospho-L-seryl-[protein] + ADP + H(+). The enzyme catalyses L-threonyl-[protein] + ATP = O-phospho-L-threonyl-[protein] + ADP + H(+). With respect to regulation, activated by DAG and phorbol esters. Phorbol-ester/DAG-type domains 1 and 2 bind both DAG and phorbol ester with high affinity and mediate translocation to the cell membrane. Autophosphorylation of Ser-735 and phosphorylation of Ser-731 by PKC relieves auto-inhibition by the PH domain. Functionally, converts transient diacylglycerol (DAG) signals into prolonged physiological effects, downstream of PKC. Involved in resistance to oxidative stress. This chain is Serine/threonine-protein kinase D3 (PRKD3), found in Homo sapiens (Human).